Here is a 657-residue protein sequence, read N- to C-terminus: Glycogen debranching enzyme (657 aa).

Residue Asp336 is the Nucleophile of the active site. Residue Glu371 is the Proton donor of the active site. The span at 458–467 (NEANGEENRD) shows a compositional bias: basic and acidic residues. Residues 458–479 (NEANGEENRDGTNNNYSNNHGK) form a disordered region.

It belongs to the glycosyl hydrolase 13 family.

It carries out the reaction Hydrolysis of (1-&gt;6)-alpha-D-glucosidic linkages to branches with degrees of polymerization of three or four glucose residues in limit dextrin.. It functions in the pathway glycan degradation; glycogen degradation. Functionally, removes maltotriose and maltotetraose chains that are attached by 1,6-alpha-linkage to the limit dextrin main chain, generating a debranched limit dextrin. The chain is Glycogen debranching enzyme from Escherichia coli (strain 55989 / EAEC).